We begin with the raw amino-acid sequence, 143 residues long: 3-hydroxyacyl-[acyl-carrier-protein] dehydratase FabZ (143 aa).

The active site involves H48.

This sequence belongs to the thioester dehydratase family. FabZ subfamily.

The protein localises to the cytoplasm. The catalysed reaction is a (3R)-hydroxyacyl-[ACP] = a (2E)-enoyl-[ACP] + H2O. Functionally, involved in unsaturated fatty acids biosynthesis. Catalyzes the dehydration of short chain beta-hydroxyacyl-ACPs and long chain saturated and unsaturated beta-hydroxyacyl-ACPs. The protein is 3-hydroxyacyl-[acyl-carrier-protein] dehydratase FabZ of Roseiflexus sp. (strain RS-1).